The primary structure comprises 134 residues: Profilin-4 (134 aa).

Cysteines 13 and 118 form a disulfide. An Involved in PIP2 interaction motif is present at residues 84–100 (AVIRGKKGSGGITIKKT). Thr114 carries the phosphothreonine modification.

It belongs to the profilin family. As to quaternary structure, occurs in many kinds of cells as a complex with monomeric actin in a 1:1 ratio. Phosphorylated by MAP kinases.

The protein localises to the cytoplasm. Its subcellular location is the cytoskeleton. Its function is as follows. Binds to actin and affects the structure of the cytoskeleton. At high concentrations, profilin prevents the polymerization of actin, whereas it enhances it at low concentrations. The protein is Profilin-4 of Olea europaea (Common olive).